We begin with the raw amino-acid sequence, 159 residues long: Small ribosomal subunit protein uS4 (159 aa).

The S4 RNA-binding domain occupies 106 to 158 (RRLQTIVYRMGLAKSIHHARQLIVHGHVAVAGRRVTSPGFLVPRELEDKISLI).

Belongs to the universal ribosomal protein uS4 family. Part of the 30S ribosomal subunit. Contacts protein S5. The interaction surface between S4 and S5 is involved in control of translational fidelity.

In terms of biological role, one of the primary rRNA binding proteins, it binds directly to 16S rRNA where it nucleates assembly of the body of the 30S subunit. Functionally, with S5 and S12 plays an important role in translational accuracy. The chain is Small ribosomal subunit protein uS4 from Pyrobaculum aerophilum (strain ATCC 51768 / DSM 7523 / JCM 9630 / CIP 104966 / NBRC 100827 / IM2).